The following is a 428-amino-acid chain: Immunoglobulin superfamily containing leucine-rich repeat protein (428 aa).

Positions Met-1–Ala-18 are cleaved as a signal peptide. Positions Cys-19–Ala-50 constitute an LRRNT domain. The N-linked (GlcNAc...) asparagine glycan is linked to Asn-51. LRR repeat units lie at residues Asn-51 to Glu-72, Leu-75 to Ser-96, His-99 to Ser-122, Ala-123 to Ser-144, and Ala-147 to Pro-168. The LRRCT domain maps to Asn-180–Ala-231. The region spanning Pro-232 to Ala-343 is the Ig-like domain. The cysteines at positions 257 and 327 are disulfide-linked. N-linked (GlcNAc...) asparagine glycosylation occurs at Asn-309.

It is found in the secreted. This is Immunoglobulin superfamily containing leucine-rich repeat protein (ISLR) from Pongo abelii (Sumatran orangutan).